A 369-amino-acid chain; its full sequence is Tetraacyldisaccharide 4'-kinase (369 aa).

ATP is bound at residue 68–75 (VVGGTGKT).

Belongs to the LpxK family.

The enzyme catalyses a lipid A disaccharide + ATP = a lipid IVA + ADP + H(+). It functions in the pathway glycolipid biosynthesis; lipid IV(A) biosynthesis; lipid IV(A) from (3R)-3-hydroxytetradecanoyl-[acyl-carrier-protein] and UDP-N-acetyl-alpha-D-glucosamine: step 6/6. Functionally, transfers the gamma-phosphate of ATP to the 4'-position of a tetraacyldisaccharide 1-phosphate intermediate (termed DS-1-P) to form tetraacyldisaccharide 1,4'-bis-phosphate (lipid IVA). This is Tetraacyldisaccharide 4'-kinase from Chlamydia trachomatis serovar D (strain ATCC VR-885 / DSM 19411 / UW-3/Cx).